A 331-amino-acid chain; its full sequence is Beta-hexosaminidase (331 aa).

Substrate is bound by residues Asp60, Arg68, Arg133, and 163-164 (KH). The Proton donor/acceptor role is filled by His176. The active-site Nucleophile is Asp247.

Belongs to the glycosyl hydrolase 3 family. NagZ subfamily.

It localises to the cytoplasm. It catalyses the reaction Hydrolysis of terminal non-reducing N-acetyl-D-hexosamine residues in N-acetyl-beta-D-hexosaminides.. It functions in the pathway cell wall biogenesis; peptidoglycan recycling. Plays a role in peptidoglycan recycling by cleaving the terminal beta-1,4-linked N-acetylglucosamine (GlcNAc) from peptide-linked peptidoglycan fragments, giving rise to free GlcNAc, anhydro-N-acetylmuramic acid and anhydro-N-acetylmuramic acid-linked peptides. The polypeptide is Beta-hexosaminidase (Xanthomonas campestris pv. campestris (strain B100)).